A 431-amino-acid chain; its full sequence is Histidinol dehydrogenase (431 aa).

Positions 130, 191, and 214 each coordinate NAD(+). Residues Ser237, Gln259, and His262 each coordinate substrate. The Zn(2+) site is built by Gln259 and His262. Residues Glu327 and His328 each act as proton acceptor in the active site. The substrate site is built by His328, Asp361, Glu415, and His420. Position 361 (Asp361) interacts with Zn(2+). His420 contacts Zn(2+).

Belongs to the histidinol dehydrogenase family. Zn(2+) serves as cofactor.

The catalysed reaction is L-histidinol + 2 NAD(+) + H2O = L-histidine + 2 NADH + 3 H(+). It participates in amino-acid biosynthesis; L-histidine biosynthesis; L-histidine from 5-phospho-alpha-D-ribose 1-diphosphate: step 9/9. Functionally, catalyzes the sequential NAD-dependent oxidations of L-histidinol to L-histidinaldehyde and then to L-histidine. In Bradyrhizobium diazoefficiens (strain JCM 10833 / BCRC 13528 / IAM 13628 / NBRC 14792 / USDA 110), this protein is Histidinol dehydrogenase.